The primary structure comprises 149 residues: NADH-quinone oxidoreductase subunit I 1 (149 aa).

2 consecutive 4Fe-4S ferredoxin-type domains span residues 51 to 82 and 93 to 122; these read LKSFADTGTHKCIACGTCERMCPSNVIKVQGT and THYVIDFTRCSLCGICVESCPTGTLQYSTE. Residues Cys-62, Cys-65, Cys-68, Cys-72, Cys-102, Cys-105, Cys-108, and Cys-112 each contribute to the [4Fe-4S] cluster site.

Belongs to the complex I 23 kDa subunit family. In terms of assembly, NDH-1 is composed of 14 different subunits. Subunits NuoA, H, J, K, L, M, N constitute the membrane sector of the complex. [4Fe-4S] cluster is required as a cofactor.

It is found in the cell inner membrane. The catalysed reaction is a quinone + NADH + 5 H(+)(in) = a quinol + NAD(+) + 4 H(+)(out). Its function is as follows. NDH-1 shuttles electrons from NADH, via FMN and iron-sulfur (Fe-S) centers, to quinones in the respiratory chain. The immediate electron acceptor for the enzyme in this species is believed to be ubiquinone. Couples the redox reaction to proton translocation (for every two electrons transferred, four hydrogen ions are translocated across the cytoplasmic membrane), and thus conserves the redox energy in a proton gradient. This chain is NADH-quinone oxidoreductase subunit I 1, found in Syntrophobacter fumaroxidans (strain DSM 10017 / MPOB).